A 255-amino-acid chain; its full sequence is 5'-nucleotidase SurE (255 aa).

Positions 8, 9, 40, and 93 each coordinate a divalent metal cation.

This sequence belongs to the SurE nucleotidase family. Requires a divalent metal cation as cofactor.

The protein localises to the cytoplasm. It carries out the reaction a ribonucleoside 5'-phosphate + H2O = a ribonucleoside + phosphate. Nucleotidase that shows phosphatase activity on nucleoside 5'-monophosphates. This is 5'-nucleotidase SurE from Rhodopseudomonas palustris (strain BisA53).